The chain runs to 308 residues: Ribosomal RNA small subunit methyltransferase H (308 aa).

Residues 36–38, D55, F86, D103, and Q110 each bind S-adenosyl-L-methionine; that span reads GGH.

Belongs to the methyltransferase superfamily. RsmH family.

Its subcellular location is the cytoplasm. It catalyses the reaction cytidine(1402) in 16S rRNA + S-adenosyl-L-methionine = N(4)-methylcytidine(1402) in 16S rRNA + S-adenosyl-L-homocysteine + H(+). Its function is as follows. Specifically methylates the N4 position of cytidine in position 1402 (C1402) of 16S rRNA. This Helicobacter pylori (strain HPAG1) protein is Ribosomal RNA small subunit methyltransferase H.